The following is a 187-amino-acid chain: Interferon beta (187 aa).

Residues 1-21 (MTSRSLLPFVLSLLLPRIIMA) form the signal peptide. Tyr-24 is modified (phosphotyrosine). An intrachain disulfide couples Cys-53 to Cys-162. N-linked (GlcNAc...) asparagine glycosylation is found at Asn-76, Asn-95, Asn-132, and Asn-158.

The protein belongs to the alpha/beta interferon family. As to quaternary structure, monomer.

The protein localises to the secreted. Type I interferon cytokine that plays a key role in the innate immune response to infection, developing tumors and other inflammatory stimuli. Signals via binding to high-affinity (IFNAR2) and low-affinity (IFNAR1) heterodimeric receptor, activating the canonical Jak-STAT signaling pathway resulting in transcriptional activation or repression of interferon-regulated genes that encode the effectors of the interferon response, such as antiviral proteins, regulators of cell proliferation and differentiation, and immunoregulatory proteins. Signals mostly via binding to a IFNAR1-IFNAR2 heterodimeric receptor, but can also function with IFNAR1 alone and independently of Jak-STAT pathways. Elicits a wide variety of responses, including antiviral and antibacterial activities, and can regulate the development of B-cells, myelopoiesis and lipopolysaccharide (LPS)-inducible production of tumor necrosis factor. Plays a role in neuronal homeostasis by regulating dopamine turnover and protecting dopaminergic neurons: acts by promoting neuronal autophagy and alpha-synuclein clearance, thereby preventing dopaminergic neuron loss. IFNB1 is more potent than interferon-alpha (IFN-alpha) in inducing the apoptotic and antiproliferative pathways required for control of tumor cell growth. The sequence is that of Interferon beta (IFNB1) from Tachyglossus aculeatus aculeatus (Southeast Australian short-beaked echidna).